The sequence spans 415 residues: Thylakoid ADP,ATP carrier protein, chloroplastic (415 aa).

A chloroplast-targeting transit peptide spans 1–61 (MGEEKSLLQF…NFASLSVAIR (61 aa)). 5 helical membrane passes run 106 to 126 (IALL…AFAG), 182 to 207 (LPQV…KLFR), 219 to 239 (LGAG…LDVL), 273 to 293 (GPSL…FDLV), and 309 to 329 (LLTA…LDTI). Solcar repeat units follow at residues 113-205 (PKDA…YKKL), 213-296 (LSVL…VKKS), and 307-387 (SSLL…VKKL). Arg187 serves as a coordination point for ADP. Arg330 serves as a coordination point for ADP. Residues 362–388 (GFVPNALKSMPNSSIKLTTFDIVKKLI) traverse the membrane as a helical segment.

This sequence belongs to the mitochondrial carrier (TC 2.A.29) family. Highly expressed in developing photosynthetic organs such as leaves, flower buds and green siliques. Also detected in roots, flowers, mature leaves and stems.

It localises to the plastid. The protein resides in the chloroplast thylakoid membrane. It is found in the chloroplast envelope. KM and Vmax values toward ATP only are increased by m-chlorocarbonyl cyanide phenylhydrazone (CCCP). The corresponding values for ADP are not affected. Specifically transports adenine nucleotides. Involved in the uptake of ATP into thylakoids in exchange for lumenal ADP. The polypeptide is Thylakoid ADP,ATP carrier protein, chloroplastic (TAAC) (Arabidopsis thaliana (Mouse-ear cress)).